Reading from the N-terminus, the 113-residue chain is Pancreatic progenitor cell differentiation and proliferation factor B (113 aa).

Belongs to the PPDPF family.

Functionally, probable regulator of exocrine pancreas development. The protein is Pancreatic progenitor cell differentiation and proliferation factor B (ppdpf-b) of Xenopus laevis (African clawed frog).